A 358-amino-acid chain; its full sequence is MSAQTITTTETTQNAQKPQQYHWRMVWRNIILYIIMHLTGFYGLYLAMFYAQWKTVFYSWFLLVIALQGVTAGSHRLWAHKAYKARLPLRMLLCIFQTLSLQNHIYDWATYHRVHHKFVDTNADPHNSRRGFFFSHMGWLFIEPHKDVEDKYKSIDFSDLHADSVVMIQKKYYHTFFAPVIGFYLPAAIPWYFWGENFWTAFFVATMLRYCACTNITFLVNSWAHIYGSRPYDKNIYPTESATIAVLTGGEGWHNYHHTFPWDYKTGEFGKYRSNLTTGFLDFMAAIGWAYDLKTVSEEMIMKRVLRTGDGTRKFDKIDKILNVDDDHHHEDMLWGWGDSDMAKEEMNYVKIHNRKED.

2 consecutive transmembrane segments (helical) span residues I30–Y50 and T55–H75. Fe cation-binding residues include H75, H80, H112, H115, and H116. The short motif at H75–H80 is the Histidine box-1 element. Residues H112–H116 carry the Histidine box-2 motif. Helical transmembrane passes span T175–G195 and T200–V220. H225, H254, H257, and H258 together coordinate Fe cation. Positions H254–H258 match the Histidine box-3 motif.

This sequence belongs to the fatty acid desaturase type 1 family. Fe(2+) serves as cofactor.

It localises to the membrane. It carries out the reaction (9Z)-octadecenoyl-CoA + 2 Fe(II)-[cytochrome b5] + O2 + 2 H(+) = (9Z,12Z)-octadecadienoyl-CoA + 2 Fe(III)-[cytochrome b5] + 2 H2O. The catalysed reaction is (9Z)-hexadecenoyl-CoA + 2 Fe(II)-[cytochrome b5] + O2 + 2 H(+) = (9Z,12Z)-hexadecadienoyl-CoA + 2 Fe(III)-[cytochrome b5] + 2 H2O. In terms of biological role, catalyzes the formation of a Delta12 double bond, acting on monounsaturated fatty acyl substrates like palmitoleoyl-CoA ((9Z)-hexadecenoyl-CoA) and oleoyl-CoA ((9Z)-octadecenoyl-CoA) with higher desaturation activity on (9Z)-octadecenoyl-CoA than (9Z)-hexadecenoyl-CoA. Requires preexisting cis double bond at the Delta9 position of fatty acyls to be able to insert the Delta12 double bond. Delta12-desaturation of (9Z)-octadecenoyl-CoA in insects produces (9Z,12Z)-octadecadienoyl-CoA (linoleoyl-CoA) which may be used to supply precursors of crucial mediators of immunity and reproduction and other essential functions. This is Acyl-CoA Delta-12 desaturase from Tribolium castaneum (Red flour beetle).